The primary structure comprises 410 residues: Cytochrome P450 105A3 (410 aa).

Residue cysteine 359 participates in heme binding.

This sequence belongs to the cytochrome P450 family. Monomer. Heme is required as a cofactor.

In terms of biological role, catalyzes the hydroxylation of sodium ML-236B carboxylate to pravastatin. The polypeptide is Cytochrome P450 105A3 (cyp105A3) (Streptomyces carbophilus).